The sequence spans 291 residues: Pituitary-specific positive transcription factor 1 (291 aa).

Positions 5–13 (PFTSADTFI) match the 9aaTAD motif. The POU-specific domain maps to 124–198 (MDSPEIRELE…ILSKWLEEAE (75 aa)). The segment at residues 214–273 (KRKRRTTISIAAKDALERHFGEQNKPSSQEILRMAEELNLEKEVVRVWFCNRRQREKRVK) is a DNA-binding region (homeobox).

This sequence belongs to the POU transcription factor family. Class-1 subfamily. As to quaternary structure, interacts with PITX1. Interacts with LHX3. Interacts with ELK1.

Its subcellular location is the nucleus. Its function is as follows. Transcription factor involved in the specification of the lactotrope, somatotrope, and thyrotrope phenotypes in the developing anterior pituitary. Activates growth hormone and prolactin genes. Specifically binds to the consensus sequence 5'-TAAAT-3'. The chain is Pituitary-specific positive transcription factor 1 (POU1F1) from Sus scrofa (Pig).